We begin with the raw amino-acid sequence, 388 residues long: Sulfate adenylyltransferase (388 aa).

This sequence belongs to the sulfate adenylyltransferase family.

The catalysed reaction is sulfate + ATP + H(+) = adenosine 5'-phosphosulfate + diphosphate. It functions in the pathway sulfur metabolism; hydrogen sulfide biosynthesis; sulfite from sulfate: step 1/3. This chain is Sulfate adenylyltransferase, found in Trichodesmium erythraeum (strain IMS101).